Consider the following 1429-residue polypeptide: uncharacterized protein (1429 aa).

2 disordered regions span residues 1–76 and 103–130; these read MEGE…SGIE and PAGA…AGEK. The span at 14–29 shows a compositional bias: low complexity; sequence SHSTSVVSERASSSGV. Polar residues predominate over residues 109–121; the sequence is SAQNANLISSKSE. 2 consecutive transmembrane segments (helical) span residues 197–217 and 225–245; these read LTGQ…LSWI and FFIL…CMIS. One can recognise an SMP-LTD domain in the interval 266-471; it reads DYETMSWFNT…WPNMFDYDLS (206 aa). 2 consecutive C2 domains span residues 462–584 and 738–858; these read WPNM…GDIY and TPVD…DRSA. The interval 899–932 is disordered; it reads NTDNSSKQSSENVQSATDPTTPAKDNSTSNAETS. Residues 1060-1177 form the C2 3 domain; it reads TYMPVPMTLN…EPNVESQQSI (118 aa). A disordered region spans residues 1280–1303; it reads EKNPSRSDLTTTQEASSSASVPPA. A compositionally biased stretch (low complexity) spans 1294 to 1303; that stretch reads ASSSASVPPA.

The protein localises to the membrane. This is an uncharacterized protein from Schizosaccharomyces pombe (strain 972 / ATCC 24843) (Fission yeast).